The chain runs to 133 residues: Small ribosomal subunit protein uS9 (133 aa).

Belongs to the universal ribosomal protein uS9 family.

This Ureaplasma parvum serovar 3 (strain ATCC 700970) protein is Small ribosomal subunit protein uS9.